Reading from the N-terminus, the 413-residue chain is Tyrosine--tRNA ligase (413 aa).

A 'HIGH' region motif is present at residues 55–64 (PTRPDLHLGH). Residues 242–246 (KMSKS) carry the 'KMSKS' region motif. Lys-245 serves as a coordination point for ATP. The region spanning 346–410 (VKLSYILREC…GKKAFRRLVK (65 aa)) is the S4 RNA-binding domain.

Belongs to the class-I aminoacyl-tRNA synthetase family. TyrS type 2 subfamily. In terms of assembly, homodimer.

The protein resides in the cytoplasm. The catalysed reaction is tRNA(Tyr) + L-tyrosine + ATP = L-tyrosyl-tRNA(Tyr) + AMP + diphosphate + H(+). Catalyzes the attachment of tyrosine to tRNA(Tyr) in a two-step reaction: tyrosine is first activated by ATP to form Tyr-AMP and then transferred to the acceptor end of tRNA(Tyr). This is Tyrosine--tRNA ligase from Synechococcus sp. (strain JA-2-3B'a(2-13)) (Cyanobacteria bacterium Yellowstone B-Prime).